The following is a 546-amino-acid chain: DDB1- and CUL4-associated factor 11 (546 aa).

Residues 1–19 are compositionally biased toward low complexity; the sequence is MGSRNSSSAGSGSGDPSEG. The interval 1–40 is disordered; that stretch reads MGSRNSSSAGSGSGDPSEGLPRRGAGLRRSEEEEEEDEDV. Phosphoserine occurs at positions 49 and 75. WD repeat units follow at residues 170–210, 216–258, 263–302, 305–345, 353–392, 435–480, and 481–520; these read SYSQ…RKFK, DVGW…TALD, ERRF…RTLQ, SHED…EDDP, GHQD…SREG, GVLH…KKLT, and NHKA…YFQD. The interval 523–546 is disordered; it reads PESEECASAPAPVPQSSTPFSSPQ. Over residues 536-546 the composition is skewed to polar residues; it reads PQSSTPFSSPQ.

Interacts with DDB1 and CUL4A.

The protein operates within protein modification; protein ubiquitination. Functionally, may function as a substrate receptor for CUL4-DDB1 E3 ubiquitin-protein ligase complex. This Homo sapiens (Human) protein is DDB1- and CUL4-associated factor 11 (DCAF11).